Consider the following 119-residue polypeptide: Holo-[acyl-carrier-protein] synthase (119 aa).

Residues Asp-8 and Glu-59 each coordinate Mg(2+).

Belongs to the P-Pant transferase superfamily. AcpS family. Mg(2+) is required as a cofactor.

It localises to the cytoplasm. It catalyses the reaction apo-[ACP] + CoA = holo-[ACP] + adenosine 3',5'-bisphosphate + H(+). Functionally, transfers the 4'-phosphopantetheine moiety from coenzyme A to a Ser of acyl-carrier-protein. This Lactococcus lactis subsp. lactis (strain IL1403) (Streptococcus lactis) protein is Holo-[acyl-carrier-protein] synthase.